A 647-amino-acid polypeptide reads, in one-letter code: Pollen receptor-like kinase 2 (647 aa).

The signal sequence occupies residues 1 to 21; it reads MESKCLMFVSIVSVFFMVVNG. LRR repeat units follow at residues 87–109, 110–134, 136–159, 161–183, and 185–203; these read LNSL…EFKK, LVAL…AFDG, GWLK…LVKS, KLIE…RHHP, and MLNL…SFST. Residues 248 to 268 form a helical membrane-spanning segment; sequence IVAAAVAALAASLIIIGVVIF. The region spanning 338–613 is the Protein kinase domain; it reads KASAEILGSG…EAVEKMEDLM (276 aa). Position 340 is a phosphoserine (serine 340). ATP-binding positions include 344–352 and lysine 366; that span reads LGSGCFGAS. Residue serine 418 is modified to Phosphoserine. Threonine 438 bears the Phosphothreonine mark. A Phosphotyrosine modification is found at tyrosine 508. A disordered region spans residues 620 to 647; sequence DDDFYSTYASEADGRSSRGLSSEGINLS. Residues 637-647 show a composition bias toward polar residues; sequence RGLSSEGINLS.

It belongs to the protein kinase superfamily. Ser/Thr protein kinase family. In terms of assembly, part of a complex containing ROPGEF1 and ARAC11/ROP1. The interaction between PRK2, ROPGEF1 and ARAC11/ROP1 is phosphorylation-independent. Interacts with ROPGEF12 (via C-terminus). Interacts with ROPGEF1 (via PRONE domain). Expressed in pollen and/or in flowers, but not in leaves. Expressed in pollen tube.

The protein localises to the cell membrane. It carries out the reaction L-seryl-[protein] + ATP = O-phospho-L-seryl-[protein] + ADP + H(+). The catalysed reaction is L-threonyl-[protein] + ATP = O-phospho-L-threonyl-[protein] + ADP + H(+). Its activity is regulated as follows. The phosphorylation activity is calcium-independent. Its function is as follows. Receptor-like kinase involved in the control of pollen germination and pollen tube polar growth. Phosphorylates ROPGEF1 in its C-terminal region, releasing its auto-inhibition, and thereby activating the ROP1 signaling pathway. May act as a scaffolding protein, recruiting ROPGEF12 to the plasma membrane by binding to its C-terminal domain. Phosphorylates ROPGEF12, releasing its auto-inhibition. In Arabidopsis thaliana (Mouse-ear cress), this protein is Pollen receptor-like kinase 2.